The sequence spans 129 residues: Translation initiation factor 5A (129 aa).

Lys36 bears the Hypusine mark.

The protein belongs to the eIF-5A family.

It localises to the cytoplasm. In terms of biological role, functions by promoting the formation of the first peptide bond. The chain is Translation initiation factor 5A (eif5a) from Thermoplasma acidophilum (strain ATCC 25905 / DSM 1728 / JCM 9062 / NBRC 15155 / AMRC-C165).